Consider the following 242-residue polypeptide: MSGFFITATDTEVGKTVVAGALAGVFRELGYNIGVYKALQSGHVASNPEGDAARLKVLSGVPTKEDEICPYSIEEPLAPRLAMKRAGRAVTLKDIIHHYNERLKEFNSLFVEGAGGLAVPYTEDALVIDFAKELQLPLIVVARPTLGTVNHTVLTIAYAKAHGLTVAGVILSGCKECEMERVQENKVMIEELSGVPVLGLLPFFEGEFTKEEVLESAKEYIMISKLEEFIRNESTVAHTSSN.

E12–V17 provides a ligand contact to ATP. Residue T16 participates in Mg(2+) binding. K37 is an active-site residue. Residue S41 coordinates substrate. ATP-binding positions include D51 and E112 to G115. 2 residues coordinate Mg(2+): D51 and E112.

This sequence belongs to the dethiobiotin synthetase family. Homodimer. Requires Mg(2+) as cofactor.

The protein resides in the cytoplasm. It carries out the reaction (7R,8S)-7,8-diammoniononanoate + CO2 + ATP = (4R,5S)-dethiobiotin + ADP + phosphate + 3 H(+). It participates in cofactor biosynthesis; biotin biosynthesis; biotin from 7,8-diaminononanoate: step 1/2. Catalyzes a mechanistically unusual reaction, the ATP-dependent insertion of CO2 between the N7 and N8 nitrogen atoms of 7,8-diaminopelargonic acid (DAPA, also called 7,8-diammoniononanoate) to form a ureido ring. This Bacillus cereus (strain AH820) protein is ATP-dependent dethiobiotin synthetase BioD.